We begin with the raw amino-acid sequence, 38 residues long: Lebetin-2-alpha (38 aa).

The disordered stretch occupies residues 1–38; that stretch reads GDNKPPKKGPPNGCFGHKIDRIGSHSGLGCNKVDDNKG. Cysteines 14 and 30 form a disulfide.

It belongs to the natriuretic peptide family. In terms of tissue distribution, expressed by the venom gland.

It localises to the secreted. In terms of biological role, inhibits platelet aggregation induced by thrombin, collagen and PAF-acether. Human platelet aggregation induced by thrombin is inhibited by synthetic lebetin-1-alpha with (IC(50)=140 nM). In vivo, inhibits collagen-induced thrombocytopenia in rats. Is not toxic upon intravenous injection into mice and rats. Functionally, inhibits platelet aggregation induced by thrombin, collagen and PAF-acether. Human platelet aggregation induced by thrombin is inhibited by synthetic lebetin-1-beta with (IC(50)=32 nM). In vivo, inhibits collagen-induced thrombocytopenia in rats. Is not toxic upon intravenous injection into mice and rats. Inhibits platelet aggregation induced by thrombin, collagen and PAF-acether. Human platelet aggregation induced by thrombin is inhibited by synthetic lebetin-1-gamma with (IC(50)=5 nM). In vivo, inhibits collagen-induced thrombocytopenia in rats. Is not toxic upon intravenous injection into mice and rats. Its function is as follows. Inhibits platelet aggregation induced by thrombin, collagen and PAF-acether. Human platelet aggregation induced by thrombin is inhibited by synthetic lebetin-1-alpha with (IC(50)=2.5 nM). In vivo, inhibits collagen-induced thrombocytopenia in rats. Is not toxic upon intravenous injection into mice and rats. In terms of biological role, inhibits platelet aggregation induced by thrombin, collagen and PAF-acether. Human platelet aggregation induced by thrombin is inhibited by synthetic lebetin-1-alpha with (IC(50)=2.8 nM). In vivo, inhibits collagen-induced thrombocytopenia in rats. Is not toxic upon intravenous injection into mice and rats. The chain is Lebetin-2-alpha from Macrovipera lebetinus (Levantine viper).